The primary structure comprises 249 residues: RNA-free ribonuclease P (249 aa).

The segment at 226 to 249 is disordered; the sequence is NENEPEYENRDKSKEGSSGEIEFI. The segment covering 232 to 242 has biased composition (basic and acidic residues); sequence YENRDKSKEGS.

This sequence belongs to the HARP family.

The catalysed reaction is Endonucleolytic cleavage of RNA, removing 5'-extranucleotides from tRNA precursor.. Functionally, RNA-free RNase P that catalyzes the removal of the 5'-leader sequence from pre-tRNA to produce the mature 5'-terminus. The polypeptide is RNA-free ribonuclease P (Methanosarcina barkeri (strain Fusaro / DSM 804)).